A 379-amino-acid chain; its full sequence is tRNA 2-selenouridine synthase (379 aa).

Residues 15 to 138 form the Rhodanese domain; that stretch reads FQQNIPLMDV…ARNYLIKQIE (124 aa). Cys98 (S-selanylcysteine intermediate) is an active-site residue.

The protein belongs to the SelU family. In terms of assembly, monomer.

The enzyme catalyses 5-methylaminomethyl-2-thiouridine(34) in tRNA + selenophosphate + (2E)-geranyl diphosphate + H2O + H(+) = 5-methylaminomethyl-2-selenouridine(34) in tRNA + (2E)-thiogeraniol + phosphate + diphosphate. It carries out the reaction 5-methylaminomethyl-2-thiouridine(34) in tRNA + (2E)-geranyl diphosphate = 5-methylaminomethyl-S-(2E)-geranyl-thiouridine(34) in tRNA + diphosphate. It catalyses the reaction 5-methylaminomethyl-S-(2E)-geranyl-thiouridine(34) in tRNA + selenophosphate + H(+) = 5-methylaminomethyl-2-(Se-phospho)selenouridine(34) in tRNA + (2E)-thiogeraniol. The catalysed reaction is 5-methylaminomethyl-2-(Se-phospho)selenouridine(34) in tRNA + H2O = 5-methylaminomethyl-2-selenouridine(34) in tRNA + phosphate. Functionally, involved in the post-transcriptional modification of the uridine at the wobble position (U34) of tRNA(Lys), tRNA(Glu) and tRNA(Gln). Catalyzes the conversion of 2-thiouridine (S2U-RNA) to 2-selenouridine (Se2U-RNA). Acts in a two-step process involving geranylation of 2-thiouridine (S2U) to S-geranyl-2-thiouridine (geS2U) and subsequent selenation of the latter derivative to 2-selenouridine (Se2U) in the tRNA chain. This chain is tRNA 2-selenouridine synthase, found in Bdellovibrio bacteriovorus (strain ATCC 15356 / DSM 50701 / NCIMB 9529 / HD100).